A 314-amino-acid chain; its full sequence is Malate dehydrogenase (314 aa).

NAD(+) is bound by residues Gly-11–Gly-16 and Asp-35. Positions 84 and 90 each coordinate substrate. Residues Asn-97 and Ile-120 to Asn-122 each bind NAD(+). Asn-122 and Arg-153 together coordinate substrate. Residue His-177 is the Proton acceptor of the active site.

Belongs to the LDH/MDH superfamily. MDH type 3 family.

The catalysed reaction is (S)-malate + NAD(+) = oxaloacetate + NADH + H(+). In terms of biological role, catalyzes the reversible oxidation of malate to oxaloacetate. The chain is Malate dehydrogenase from Rickettsia typhi (strain ATCC VR-144 / Wilmington).